A 324-amino-acid polypeptide reads, in one-letter code: Glyoxylate/hydroxypyruvate reductase B (324 aa).

Active-site residues include R237 and E266. H285 acts as the Proton donor in catalysis.

Belongs to the D-isomer specific 2-hydroxyacid dehydrogenase family. GhrB subfamily. In terms of assembly, homodimer.

It localises to the cytoplasm. The enzyme catalyses glycolate + NADP(+) = glyoxylate + NADPH + H(+). The catalysed reaction is (R)-glycerate + NAD(+) = 3-hydroxypyruvate + NADH + H(+). It catalyses the reaction (R)-glycerate + NADP(+) = 3-hydroxypyruvate + NADPH + H(+). Catalyzes the NADPH-dependent reduction of glyoxylate and hydroxypyruvate into glycolate and glycerate, respectively. This chain is Glyoxylate/hydroxypyruvate reductase B, found in Shigella boydii serotype 4 (strain Sb227).